Reading from the N-terminus, the 145-residue chain is Probable thioredoxin-2 (145 aa).

One can recognise a Thioredoxin domain in the interval V39 to A144. Catalysis depends on nucleophile residues C68 and C71. C68 and C71 are disulfide-bonded.

Belongs to the thioredoxin family.

Its function is as follows. Participates in various redox reactions through the reversible oxidation of its active center dithiol to a disulfide and catalyzes dithiol-disulfide exchange reactions. The polypeptide is Probable thioredoxin-2 (trx-2) (Caenorhabditis elegans).